The chain runs to 141 residues: Hemoglobin subunit alpha (141 aa).

The 141-residue stretch at 1–141 (VLSDEDKTNV…VSTVLTSKYR (141 aa)) folds into the Globin domain. Phosphoserine is present on Ser3. Lys7 is subject to N6-succinyllysine. Phosphothreonine is present on Thr8. Lys11 carries the N6-succinyllysine modification. Lys16 carries the N6-acetyllysine; alternate modification. Lys16 is subject to N6-succinyllysine; alternate. Tyr24 is modified (phosphotyrosine). Ser35 is modified (phosphoserine). An N6-succinyllysine modification is found at Lys40. Position 49 is a phosphoserine (Ser49). His58 serves as a coordination point for O2. A heme b-binding site is contributed by His87. A Phosphoserine modification is found at Ser102. Thr108 is modified (phosphothreonine). 2 positions are modified to phosphoserine: Ser124 and Ser131. A phosphothreonine mark is found at Thr134 and Thr137. At Ser138 the chain carries Phosphoserine.

The protein belongs to the globin family. In terms of assembly, heterotetramer of two alpha chains and two beta chains. In terms of tissue distribution, red blood cells.

Its function is as follows. Involved in oxygen transport from the lung to the various peripheral tissues. Functionally, hemopressin acts as an antagonist peptide of the cannabinoid receptor CNR1. Hemopressin-binding efficiently blocks cannabinoid receptor CNR1 and subsequent signaling. The polypeptide is Hemoglobin subunit alpha (HBA) (Trichechus inunguis (Amazon manatee)).